The chain runs to 104 residues: Small ribosomal subunit protein uS10 (104 aa).

It belongs to the universal ribosomal protein uS10 family. Part of the 30S ribosomal subunit.

Its function is as follows. Involved in the binding of tRNA to the ribosomes. This Alkaliphilus metalliredigens (strain QYMF) protein is Small ribosomal subunit protein uS10.